A 537-amino-acid chain; its full sequence is Apolipoprotein N-acyltransferase (537 aa).

6 helical membrane passes run 10–30 (IALAIILTWGWKRALVAITAG), 37–57 (LAPFNLFPVLFITFPVLVWLI), 76–96 (YWFGLGYFVPGLYWIGYAFFV), 107–127 (FAVLGLPAYLSIFTAIGFALA), 181–201 (IGLWGMTFLTVAIFASPATLI), and 210–230 (AWRAPAAAVALLIAMSIFGAI). The CN hydrolase domain maps to 248-501 (MQPNLQQDAK…EGILDASLPA (254 aa)). Residue E295 is the Proton acceptor of the active site. K360 is a catalytic residue. The active-site Nucleophile is the C413. A helical membrane pass occupies residues 507-527 (IYARVGDVPAAVLVALAVLLA).

This sequence belongs to the CN hydrolase family. Apolipoprotein N-acyltransferase subfamily.

It localises to the cell inner membrane. The enzyme catalyses N-terminal S-1,2-diacyl-sn-glyceryl-L-cysteinyl-[lipoprotein] + a glycerophospholipid = N-acyl-S-1,2-diacyl-sn-glyceryl-L-cysteinyl-[lipoprotein] + a 2-acyl-sn-glycero-3-phospholipid + H(+). It functions in the pathway protein modification; lipoprotein biosynthesis (N-acyl transfer). Functionally, catalyzes the phospholipid dependent N-acylation of the N-terminal cysteine of apolipoprotein, the last step in lipoprotein maturation. In Bradyrhizobium diazoefficiens (strain JCM 10833 / BCRC 13528 / IAM 13628 / NBRC 14792 / USDA 110), this protein is Apolipoprotein N-acyltransferase.